The following is a 400-amino-acid chain: Enoyl-[acyl-carrier-protein] reductase [NADH] (400 aa).

NAD(+) contacts are provided by residues 48–53 (GSSSGY), 74–75 (FE), 111–112 (DA), and 139–140 (LA). Tyrosine 225 is a binding site for substrate. The active-site Proton donor is the tyrosine 235. NAD(+) contacts are provided by residues lysine 244 and 273–275 (VVT).

The protein belongs to the TER reductase family. Monomer.

The catalysed reaction is a 2,3-saturated acyl-[ACP] + NAD(+) = a (2E)-enoyl-[ACP] + NADH + H(+). The protein operates within lipid metabolism; fatty acid biosynthesis. Its function is as follows. Involved in the final reduction of the elongation cycle of fatty acid synthesis (FAS II). Catalyzes the reduction of a carbon-carbon double bond in an enoyl moiety that is covalently linked to an acyl carrier protein (ACP). This Shewanella baltica (strain OS185) protein is Enoyl-[acyl-carrier-protein] reductase [NADH].